A 266-amino-acid polypeptide reads, in one-letter code: Undecaprenyl-diphosphatase (266 aa).

The next 8 membrane-spanning stretches (helical) occupy residues 1–21, 39–59, 87–107, 111–131, 149–169, 183–203, 218–238, and 246–266; these read MDTF…FLPI, QGLS…VIYF, WWII…KDFI, LRSA…LWWA, ALLI…RSGA, AAAR…AILV, ALTL…HYFL, and MTPF…FIFL.

It belongs to the UppP family.

The protein resides in the cell inner membrane. It carries out the reaction di-trans,octa-cis-undecaprenyl diphosphate + H2O = di-trans,octa-cis-undecaprenyl phosphate + phosphate + H(+). In terms of biological role, catalyzes the dephosphorylation of undecaprenyl diphosphate (UPP). Confers resistance to bacitracin. The polypeptide is Undecaprenyl-diphosphatase (Shewanella sp. (strain MR-7)).